Reading from the N-terminus, the 185-residue chain is uncharacterized protein (185 aa).

Positions 17 to 137 (GKSSIMNALF…QKPIIVVINK (121 aa)) constitute a G domain.

This is an uncharacterized protein from Methanocaldococcus jannaschii (strain ATCC 43067 / DSM 2661 / JAL-1 / JCM 10045 / NBRC 100440) (Methanococcus jannaschii).